A 253-amino-acid chain; its full sequence is Hydroxyacylglutathione hydrolase (253 aa).

Zn(2+)-binding residues include H59, H61, D63, H64, H118, D143, and H181.

It belongs to the metallo-beta-lactamase superfamily. Glyoxalase II family. In terms of assembly, monomer. Zn(2+) is required as a cofactor.

It carries out the reaction an S-(2-hydroxyacyl)glutathione + H2O = a 2-hydroxy carboxylate + glutathione + H(+). It functions in the pathway secondary metabolite metabolism; methylglyoxal degradation; (R)-lactate from methylglyoxal: step 2/2. Thiolesterase that catalyzes the hydrolysis of S-D-lactoyl-glutathione to form glutathione and D-lactic acid. The protein is Hydroxyacylglutathione hydrolase of Prochlorococcus marinus (strain SARG / CCMP1375 / SS120).